Here is a 260-residue protein sequence, read N- to C-terminus: MKLYVDAGNTRTKWRLADGREGVVASDDISGMERSFALLAGVVTGVFVCSVLGEAFNRRLEALCGQLFGVPPHFARVKQGVLDIVPAYERLDTLGVDRWLGLVFARSHAKSQCSVVVGAGSALTVDLLDAQACHLGGWIAPGCASVEAALGGKVQFARSEAYLKALQSDGALTPPQTSAFGSSTVACVQAGVDAMIRGFLQQVIACAGTEFGGREAVYFLAGGDSPRVEAMLRELDPNLELVLSPAIVLDALVLWSEWCA.

6-13 serves as a coordination point for ATP; it reads DAGNTRTK. Substrate contacts are provided by residues Y88 and 95–98; that span reads GVDR. Catalysis depends on D97, which acts as the Proton acceptor. ATP is bound at residue S121. T184 contacts substrate.

It belongs to the type III pantothenate kinase family. Homodimer. NH4(+) is required as a cofactor. The cofactor is K(+).

The protein localises to the cytoplasm. It carries out the reaction (R)-pantothenate + ATP = (R)-4'-phosphopantothenate + ADP + H(+). It functions in the pathway cofactor biosynthesis; coenzyme A biosynthesis; CoA from (R)-pantothenate: step 1/5. Functionally, catalyzes the phosphorylation of pantothenate (Pan), the first step in CoA biosynthesis. The polypeptide is Type III pantothenate kinase (Saccharophagus degradans (strain 2-40 / ATCC 43961 / DSM 17024)).